Consider the following 84-residue polypeptide: RNA-binding protein Hfq (84 aa).

Residues D10–V70 enclose the Sm domain.

It belongs to the Hfq family. In terms of assembly, homohexamer.

In terms of biological role, RNA chaperone that binds small regulatory RNA (sRNAs) and mRNAs to facilitate mRNA translational regulation in response to envelope stress, environmental stress and changes in metabolite concentrations. Also binds with high specificity to tRNAs. The polypeptide is RNA-binding protein Hfq (Moorella thermoacetica (strain ATCC 39073 / JCM 9320)).